Reading from the N-terminus, the 359-residue chain is UPF0284 protein MTH_1426 (359 aa).

This sequence belongs to the UPF0284 family.

The sequence is that of UPF0284 protein MTH_1426 from Methanothermobacter thermautotrophicus (strain ATCC 29096 / DSM 1053 / JCM 10044 / NBRC 100330 / Delta H) (Methanobacterium thermoautotrophicum).